A 521-amino-acid polypeptide reads, in one-letter code: Cytochrome P450 1A1 (521 aa).

Substrate is bound at residue phenylalanine 229. Cysteine 463 provides a ligand contact to heme.

It belongs to the cytochrome P450 family. Requires heme as cofactor.

The protein localises to the endoplasmic reticulum membrane. It localises to the microsome membrane. The enzyme catalyses an organic molecule + reduced [NADPH--hemoprotein reductase] + O2 = an alcohol + oxidized [NADPH--hemoprotein reductase] + H2O + H(+). Cytochromes P450 are a group of heme-thiolate monooxygenases. They oxidize a variety of structurally unrelated compounds, including steroids, fatty acids, and xenobiotics. The protein is Cytochrome P450 1A1 (cyp1a1) of Chaetodon capistratus (Four-eye butterflyfish).